Consider the following 27-residue polypeptide: Secretin (27 aa).

Leu27 carries the post-translational modification Leucine amide.

The protein belongs to the glucagon family.

Its subcellular location is the secreted. Functionally, hormone involved in different processes, such as regulation of the pH of the duodenal content, food intake and water homeostasis. Exerts its biological effects by binding to secretin receptor (SCTR), a G-protein coupled receptor expressed in the basolateral domain of several cells. Acts as a key gastrointestinal hormone by regulating the pH of the duodenal content. Secreted by S cells of the duodenum in the crypts of Lieberkuehn and regulates the pH of the duodenum by (1) inhibiting the secretion of gastric acid from the parietal cells of the stomach and (2) stimulating the production of bicarbonate (NaHCO(3)) from the ductal cells of the pancreas. Production of bicarbonate is essential to neutralize the pH and ensure no damage is done to the small intestine by the gastric acid. In addition to regulating the pH of the duodenal content, plays a central role in diet induced thermogenesis: acts as a non-sympathetic brown fat (BAT) activator mediating prandial thermogenesis, which consequentially induces satiation. Mechanistically, secretin released by the gut after a meal binds to secretin receptor (SCTR) in brown adipocytes, activating brown fat thermogenesis by stimulating lipolysis, which is sensed in the brain and promotes satiation. Also able to stimulate lipolysis in white adipocytes. Also plays an important role in cellular osmoregulation: released into the systemic circulation in response to hyperosmolality and acts at different levels in the hypothalamus, pituitary and kidney to regulate water homeostasis. Also plays a role in the central nervous system, possibly by acting as a neuropeptide hormone: required for hippocampal synaptic function and neural progenitor cells maintenance. In Oryctolagus cuniculus (Rabbit), this protein is Secretin.